Reading from the N-terminus, the 421-residue chain is UDP-N-acetylglucosamine 1-carboxyvinyltransferase (421 aa).

A phosphoenolpyruvate-binding site is contributed by 22-23 (KN). Arg92 provides a ligand contact to UDP-N-acetyl-alpha-D-glucosamine. Cys116 acts as the Proton donor in catalysis. 2-(S-cysteinyl)pyruvic acid O-phosphothioketal is present on Cys116. The UDP-N-acetyl-alpha-D-glucosamine site is built by Asp306 and Val328.

This sequence belongs to the EPSP synthase family. MurA subfamily.

It localises to the cytoplasm. The enzyme catalyses phosphoenolpyruvate + UDP-N-acetyl-alpha-D-glucosamine = UDP-N-acetyl-3-O-(1-carboxyvinyl)-alpha-D-glucosamine + phosphate. It functions in the pathway cell wall biogenesis; peptidoglycan biosynthesis. Functionally, cell wall formation. Adds enolpyruvyl to UDP-N-acetylglucosamine. This Thermotoga maritima (strain ATCC 43589 / DSM 3109 / JCM 10099 / NBRC 100826 / MSB8) protein is UDP-N-acetylglucosamine 1-carboxyvinyltransferase.